Consider the following 721-residue polypeptide: DNA ligase (721 aa).

Low complexity predominate over residues 1–19; the sequence is MTAKKQGAQASASAPSGDS. Positions 1–23 are disordered; that stretch reads MTAKKQGAQASASAPSGDSPAER. NAD(+)-binding positions include 48 to 52, 97 to 98, and E162; these read DADYD and SL. Residue K164 is the N6-AMP-lysine intermediate of the active site. NAD(+) contacts are provided by R185, E221, K338, and K362. C456, C459, C474, and C480 together coordinate Zn(2+). The BRCT domain occupies 639-721; that stretch reads RAPLPLAGKT…LKLLAEVGAA (83 aa).

The protein belongs to the NAD-dependent DNA ligase family. LigA subfamily. Mg(2+) is required as a cofactor. Mn(2+) serves as cofactor.

It catalyses the reaction NAD(+) + (deoxyribonucleotide)n-3'-hydroxyl + 5'-phospho-(deoxyribonucleotide)m = (deoxyribonucleotide)n+m + AMP + beta-nicotinamide D-nucleotide.. Its function is as follows. DNA ligase that catalyzes the formation of phosphodiester linkages between 5'-phosphoryl and 3'-hydroxyl groups in double-stranded DNA using NAD as a coenzyme and as the energy source for the reaction. It is essential for DNA replication and repair of damaged DNA. This Cupriavidus metallidurans (strain ATCC 43123 / DSM 2839 / NBRC 102507 / CH34) (Ralstonia metallidurans) protein is DNA ligase.